A 438-amino-acid chain; its full sequence is Coenzyme A disulfide reductase (438 aa).

8–33 (GAVAGGATCASQIRRLDKESDIIIFE) contributes to the FAD binding site. Substrate-binding residues include Thr15, Gln19, Arg22, Ser39, and Asn42. Cys43 serves as the catalytic Nucleophile. Cys43 acts as the Redox-active in catalysis. Lys71 contacts substrate. NADP(+) is bound at residue 151-166 (VLVVGAGYVSLEVLEN). Residue 267–277 (TNVPNIYAIGD) coordinates FAD. His299 provides a ligand contact to substrate. Tyr419 contributes to the FAD binding site. Lys427 is a substrate binding site.

The protein belongs to the class-III pyridine nucleotide-disulfide oxidoreductase family. In terms of assembly, homodimer. FAD serves as cofactor.

The enzyme catalyses NADP(+) + 2 CoA = CoA-disulfide + NADPH + H(+). In terms of biological role, catalyzes specifically the NADPH-dependent reduction of coenzyme A disulfide. This is Coenzyme A disulfide reductase from Staphylococcus aureus (strain USA300).